The chain runs to 213 residues: Uridine kinase (213 aa).

Glycine 13–serine 20 contacts ATP.

This sequence belongs to the uridine kinase family.

It is found in the cytoplasm. It catalyses the reaction uridine + ATP = UMP + ADP + H(+). The enzyme catalyses cytidine + ATP = CMP + ADP + H(+). Its pathway is pyrimidine metabolism; CTP biosynthesis via salvage pathway; CTP from cytidine: step 1/3. It participates in pyrimidine metabolism; UMP biosynthesis via salvage pathway; UMP from uridine: step 1/1. In Haemophilus influenzae (strain PittGG), this protein is Uridine kinase.